Here is a 284-residue protein sequence, read N- to C-terminus: Nucleotide-binding protein NMB0738 (284 aa).

8-15 (GLSGSGKS) provides a ligand contact to ATP. 58 to 61 (DVRS) provides a ligand contact to GTP.

Belongs to the RapZ-like family.

Displays ATPase and GTPase activities. The polypeptide is Nucleotide-binding protein NMB0738 (Neisseria meningitidis serogroup B (strain ATCC BAA-335 / MC58)).